The sequence spans 115 residues: Ribonuclease P protein component (115 aa).

It belongs to the RnpA family. In terms of assembly, consists of a catalytic RNA component (M1 or rnpB) and a protein subunit.

It carries out the reaction Endonucleolytic cleavage of RNA, removing 5'-extranucleotides from tRNA precursor.. Functionally, RNaseP catalyzes the removal of the 5'-leader sequence from pre-tRNA to produce the mature 5'-terminus. It can also cleave other RNA substrates such as 4.5S RNA. The protein component plays an auxiliary but essential role in vivo by binding to the 5'-leader sequence and broadening the substrate specificity of the ribozyme. The protein is Ribonuclease P protein component of Bacillus cereus (strain B4264).